The chain runs to 420 residues: Cytochrome c biogenesis protein Ccs1 (420 aa).

3 helical membrane-spanning segments follow: residues 12–32 (LRFS…GTVI), 71–91 (TWWF…CTFL), and 157–177 (IAPI…IVGS).

Belongs to the Ccs1/CcsB family. In terms of assembly, may interact with CcsA.

It localises to the plastid. Its subcellular location is the chloroplast thylakoid membrane. Functionally, required during biogenesis of c-type cytochromes (cytochrome c6 and cytochrome f) at the step of heme attachment. The chain is Cytochrome c biogenesis protein Ccs1 from Phaeodactylum tricornutum (strain CCAP 1055/1).